Consider the following 2302-residue polypeptide: Phosphatidylinositol phosphatase PTPRQ (2302 aa).

The N-terminal stretch at 1-18 is a signal peptide; that stretch reads MMDFHFSFLFLLIGTSES. The Extracellular segment spans residues 19–1908; it reads QVDVSSSFDG…GEGLSERTVE (1890 aa). A glycan (N-linked (GlcNAc...) asparagine) is linked at N54. Fibronectin type-III domains lie at 60–155, 159–254, 310–398, 401–501, 474–566, 570–665, 670–759, 764–854, 859–948, 953–1053, 1058–1151, 1156–1243, 1248–1341, 1345–1431, 1435–1539, 1544–1642, and 1647–1748; these read PPVF…TAES, KVVN…SSST, PPQN…PPDV, AVFD…PHND, GFYE…TVRT, VPSS…TPED, SPQD…TSET, APEN…TEED, PPQN…TPEG, PPND…TDQD, PVGN…TEED, PPII…TDES, PPQN…TQES, AVRN…LPET, APTN…TLPG, PPEN…TLES, and PPNN…IKAP. N-linked (GlcNAc...) asparagine glycans are attached at residues N162, N169, N318, N354, and N389. N733 and N746 each carry an N-linked (GlcNAc...) asparagine glycan. 4 N-linked (GlcNAc...) asparagine glycosylation sites follow: N904, N998, N1010, and N1040. Residues N1251 and N1256 are each glycosylated (N-linked (GlcNAc...) asparagine). An N-linked (GlcNAc...) asparagine glycan is attached at N1805. The helical transmembrane segment at 1909-1929 threads the bilayer; the sequence is IILSVTLCILSIILLGTAIFA. At 1930-2302 the chain is on the cytoplasmic side; sequence FVRIRQKQKE…VELEWEETTM (373 aa). The 257-residue stretch at 2006–2262 folds into the Tyrosine-protein phosphatase domain; sequence FQEEFSELPK…IFLHQCILDL (257 aa). The active-site Phosphocysteine intermediate is the C2203.

It belongs to the protein-tyrosine phosphatase family. Receptor class 2A subfamily. Interacts with TPRN. TPRN, CLIC5 and PTPQR form concentric rings at the base of stereocilia and may form a complex.

It localises to the cell projection. The protein resides in the stereocilium. The protein localises to the apical cell membrane. It is found in the basal cell membrane. The catalysed reaction is a 1,2-diacyl-sn-glycero-3-phospho-(1D-myo-inositol-3,4,5-trisphosphate) + H2O = a 1,2-diacyl-sn-glycero-3-phospho-(1D-myo-inositol-4,5-bisphosphate) + phosphate. The enzyme catalyses a 1,2-diacyl-sn-glycero-3-phospho-(1D-myo-inositol-3,4,5-trisphosphate) + H2O = a 1,2-diacyl-sn-glycero-3-phospho-(1D-myo-inositol-3,4-bisphosphate) + phosphate. It catalyses the reaction a 1,2-diacyl-sn-glycero-3-phospho-(1D-myo-inositol-3,5-bisphosphate) + H2O = a 1,2-diacyl-sn-glycero-3-phospho-(1D-myo-inositol-5-phosphate) + phosphate. It carries out the reaction a 1,2-diacyl-sn-glycero-3-phospho-(1D-myo-inositol-3,5-bisphosphate) + H2O = a 1,2-diacyl-sn-glycero-3-phospho-(1D-myo-inositol-3-phosphate) + phosphate. The catalysed reaction is a 1,2-diacyl-sn-glycero-3-phospho-(1D-myo-inositol-4,5-bisphosphate) + H2O = a 1,2-diacyl-sn-glycero-3-phospho-(1D-myo-inositol 4-phosphate) + phosphate. Its function is as follows. Dephosphorylates phosphatidylinositol phosphates, such as phosphatidylinositol 3,4,5-trisphosphate (PIP3) and phosphatidylinositol 3,5-diphosphates, with preference for PIP3. Phosphate can be hydrolyzed from the D3 and D5 positions in the inositol ring. Has low tyrosine-protein phosphatase activity in vitro; however, the relevance of such activity in vivo is unclear. Plays an important role in adipogenesis of mesenchymal stem cells (MSCs). Regulates the phosphorylation state of AKT1 by regulating the levels of PIP3 level in MSCs and preadipocyte cells. Required for hair bundle maturation, a process that enables hair cells to detect and transmit sound and balance signals effectively, therefore affecting auditory function. May act by regulating the level of phosphatidylinositol 4,5-bisphosphate (PIP2) level in the basal region of hair bundles. This is Phosphatidylinositol phosphatase PTPRQ (Ptprq) from Rattus norvegicus (Rat).